The following is a 603-amino-acid chain: MAKEIILGIDLGTTNSCVAVIENKKPIVLENPEGKRTVPSVVSFNGDEVLVGDAAKRKQITNPNTISSIKRLMGTKEKVTVLNKDYTPEEISAKILTYIKEYAEKKIGAKVNKAVITVPAYFDDAQRQATKNAGIIAGLSVERIINEPTAAALAYGIDKLDKEQKILVFDLGGGTFDVSVLDMADGTFEVLSTSGDNHLGGDDWDQVIINWLLKSIADEFNIDLSKNKMAMQRLKDAAEKAKIELSGINTTTISLPFIAMDSSGQPINFEKELNRATFDNLTKNLIERLKKPVLDAMKESKLSLVDIDQVLMVGGSTRMPAVQNLVKELTGKEPNHSLNPDEVVAIGAAIQGGVLAGEIDDILLLDVTPLTLSIETMGGVATPLIPRNTKIPVSKSQIFSTAADNQPSVDIRIVQGERSLAADNKLLGNFELSGIEPAPRGVPQIEIKFNIDANGIMSVNAKDLKTQKETSITIKDSQGLSQDEIDKMIKEAEENKEKDAKVKHERELVNRADSLINQLEQVSKTENVPQEQKDVFNKQIEDLTNARDAQDYVKLEAEVKKVEDLLTNAAKFAQQAQQQNPDNQNNNKDDVTEATVTDDSTKK.

T175 is subject to Phosphothreonine; by autocatalysis. The segment covering 573-586 (AQQAQQQNPDNQNN) has biased composition (low complexity). Positions 573-603 (AQQAQQQNPDNQNNNKDDVTEATVTDDSTKK) are disordered. Positions 594–603 (ATVTDDSTKK) are enriched in polar residues.

It belongs to the heat shock protein 70 family.

Acts as a chaperone. This Ureaplasma parvum serovar 3 (strain ATCC 27815 / 27 / NCTC 11736) protein is Chaperone protein DnaK.